A 98-amino-acid chain; its full sequence is uncharacterized protein (98 aa).

Positions Met-1–Leu-19 are cleaved as a signal peptide. Residues Pro-40–Pro-98 are disordered. The segment covering Leu-87 to Pro-98 has biased composition (basic residues).

This is an uncharacterized protein from Homo sapiens (Human).